The following is a 406-amino-acid chain: Arginine deiminase (406 aa).

C396 functions as the Amidino-cysteine intermediate in the catalytic mechanism.

This sequence belongs to the arginine deiminase family.

Its subcellular location is the cytoplasm. It carries out the reaction L-arginine + H2O = L-citrulline + NH4(+). It functions in the pathway amino-acid degradation; L-arginine degradation via ADI pathway; carbamoyl phosphate from L-arginine: step 1/2. The polypeptide is Arginine deiminase (Aliivibrio salmonicida (strain LFI1238) (Vibrio salmonicida (strain LFI1238))).